A 134-amino-acid polypeptide reads, in one-letter code: DNA-binding protein inhibitor ID-2 (134 aa).

Phosphoserine is present on residues S14 and S25. One can recognise a bHLH domain in the interval 23 to 75; the sequence is SRSKTPVDDPMSLLYNMNDCYSKLKELVPSIPQNKKVSKMEILQHVIDYILDL. The Nuclear export signal signature appears at 106-115; the sequence is LNTDISILSL.

In terms of assembly, interacts with GATA4 and NKX2-5. Interacts with NR0B2. Interacts with CLOCK and BMAL1. Interacts with IFI204. Interacts with NEDD9/HEF1. Interacts with ASB4; this interaction promotes ID2 proteasomal degradation. Post-translationally, ubiquitinated in a ASB4-depedent manner, leading to proteasomal degradation. In terms of processing, phosphorylated in vitro by CDK1, PKA and PKC. As to expression, highly expressed in early fetal tissues, including those of the central nervous system.

The protein resides in the cytoplasm. Its subcellular location is the nucleus. In terms of biological role, transcriptional regulator (lacking a basic DNA binding domain) which negatively regulates the basic helix-loop-helix (bHLH) transcription factors by forming heterodimers and inhibiting their DNA binding and transcriptional activity. Implicated in regulating a variety of cellular processes, including cellular growth, senescence, differentiation, apoptosis, angiogenesis, and neoplastic transformation. Inhibits skeletal muscle and cardiac myocyte differentiation. Regulates the circadian clock by repressing the transcriptional activator activity of the CLOCK-BMAL1 heterodimer. Restricts the CLOCK and BMAL1 localization to the cytoplasm. Plays a role in both the input and output pathways of the circadian clock: in the input component, is involved in modulating the magnitude of photic entrainment and in the output component, contributes to the regulation of a variety of liver clock-controlled genes involved in lipid metabolism. This chain is DNA-binding protein inhibitor ID-2 (ID2), found in Homo sapiens (Human).